The chain runs to 233 residues: Small ribosomal subunit protein uS3 (233 aa).

The KH type-2 domain maps to 39-107 (VRKYLTKELE…PAQINIAEVR (69 aa)).

Belongs to the universal ribosomal protein uS3 family. In terms of assembly, part of the 30S ribosomal subunit. Forms a tight complex with proteins S10 and S14.

Functionally, binds the lower part of the 30S subunit head. Binds mRNA in the 70S ribosome, positioning it for translation. The protein is Small ribosomal subunit protein uS3 of Pectobacterium carotovorum subsp. carotovorum (strain PC1).